A 308-amino-acid chain; its full sequence is tRNA dimethylallyltransferase (308 aa).

Residue 9 to 16 (GPTAVGKT) coordinates ATP. A substrate-binding site is contributed by 11–16 (TAVGKT). Residues 34–37 (DSMQ) are interaction with substrate tRNA.

The protein belongs to the IPP transferase family. As to quaternary structure, monomer. The cofactor is Mg(2+).

It carries out the reaction adenosine(37) in tRNA + dimethylallyl diphosphate = N(6)-dimethylallyladenosine(37) in tRNA + diphosphate. Its function is as follows. Catalyzes the transfer of a dimethylallyl group onto the adenine at position 37 in tRNAs that read codons beginning with uridine, leading to the formation of N6-(dimethylallyl)adenosine (i(6)A). In Lactobacillus delbrueckii subsp. bulgaricus (strain ATCC BAA-365 / Lb-18), this protein is tRNA dimethylallyltransferase.